The primary structure comprises 158 residues: Na(+)/H(+) antiporter subunit E (158 aa).

2 consecutive transmembrane segments (helical) span residues 21-41 (SPSA…LFFF) and 51-71 (LWKL…LYLA).

The protein belongs to the CPA3 antiporters (TC 2.A.63) subunit E family. Forms a heterooligomeric complex that consists of seven subunits: MrpA, MrpB, MrpC, MrpD, MrpE, MrpF and MrpG.

It is found in the cell membrane. Its function is as follows. Mrp complex is a Na(+)/H(+) antiporter that is considered to be the major Na(+) excretion system in B.subtilis. Has a major role in Na(+) resistance and a minor role in Na(+)- and K(+)-dependent pH homeostasis as compared to TetB. MrpA may be the actual Na(+)/H(+) antiporter, although the six other Mrp proteins are all required for Na(+)/H(+) antiport activity and Na(+) resistance. MrpA is required for initiation of sporulation when external Na(+) concentration increases. Also transports Li(+) but not K(+), Ca(2+) or Mg(2+). This Bacillus subtilis (strain 168) protein is Na(+)/H(+) antiporter subunit E (mrpE).